Reading from the N-terminus, the 205-residue chain is High frequency lysogenization protein HflD homolog (205 aa).

The protein belongs to the HflD family.

It localises to the cytoplasm. Its subcellular location is the cell inner membrane. In Aliivibrio fischeri (strain ATCC 700601 / ES114) (Vibrio fischeri), this protein is High frequency lysogenization protein HflD homolog.